The sequence spans 546 residues: MDPKAGGGGEEDDCVDSGAETGGSDYSHLSSTSSELSVEEAQDPFLVSIHIIADPGESQPLQEAIDNVLAWIHPDLPLFRVSERRASRRRRKPPKGAQPALAVVLFLQEEYGEEQILQLHRTLQQPPWRHHHTEQVHGRFLPYLPCSQDFFTLAPGTPLWAIRPVHYGKEIVRFTVYCRYDNYADSLRFYQLILRRSPSQKKADFCIFPIFSNLDVDIQFSLKRLPCDQCPVPTDSSVLEFRVRDIGELVPLLPNPCSPISEGRWQTEDHDGNKILLQAQRVHKKFPKPGRVHHASEKKRHSTPLPSTAVPSHTPGSSQQSPLNSPHPGPIRTGLPPGHQQEFAGRANSTPNPPWSFQRSKSLFCLPTGGPSLASSAEPQWFSNTGAPGHRASEWRHGHLLSIDDLEGAQETDVDTGLRLSSSDLSVVSAYSAPSRFCSTVETPLPSERCSSHWAAHKDSREGPLPTVSRVTTEASWASLPFFTKRSSSSSATARAAPPAPSTSTLTDSSPQLPCDTPKVKQTDGDMPPPPGSAGPGDNDMEEFYI.

Disordered regions lie at residues 1-37, 286-360, and 488-546; these read MDPKAGGGGEEDDCVDSGAETGGSDYSHLSSTSSELS, FPKP…FQRS, and SSSS…EFYI. Residues 24 to 36 show a composition bias toward low complexity; it reads SDYSHLSSTSSEL. Over residues 286 to 302 the composition is skewed to basic residues; it reads FPKPGRVHHASEKKRHS. Polar residues-rich tracts occupy residues 304–324 and 347–360; these read PLPSTAVPSHTPGSSQQSPLN and ANSTPNPPWSFQRS. Over residues 488–511 the composition is skewed to low complexity; that stretch reads SSSSATARAAPPAPSTSTLTDSSP.

Belongs to the FAM124 family.

The polypeptide is Protein FAM124A (FAM124A) (Homo sapiens (Human)).